A 93-amino-acid chain; its full sequence is MIKEVILMTNVEERIEQIIQVLREQVVQDTAVPRNIRRAAEQAIEALMNKEKEPAVRAADAIAILEEISEDPNMPLHTRTIIWEVLGALEQIK.

It belongs to the UPF0147 family.

The polypeptide is UPF0147 protein PH1921.2 (Pyrococcus horikoshii (strain ATCC 700860 / DSM 12428 / JCM 9974 / NBRC 100139 / OT-3)).